A 348-amino-acid polypeptide reads, in one-letter code: GMP reductase 2 (348 aa).

Residues S26–R27, K78, D129–A131, and I180–G181 contribute to the NADP(+) site. The K(+) site is built by G181, G183, and C186. C186 serves as the catalytic Thioimidate intermediate. The Proton donor/acceptor role is filled by T188. Position 189 (R189) interacts with K(+). GMP contacts are provided by residues D219–G221, G242–G243, G268–S270, and R286–G290. Residues M269 and Y285 to R286 each bind NADP(+). K291 bears the N6-acetyllysine mark. Residue S314–T317 coordinates NADP(+).

Belongs to the IMPDH/GMPR family. GuaC type 1 subfamily. Homotetramer. In terms of tissue distribution, highly expressed in heart, skeletal muscle, kidney, brain, liver, prostate, spleen, placenta, testis and ovary. Low expression in colon, thymus and peripheral blood leukocytes.

The catalysed reaction is IMP + NH4(+) + NADP(+) = GMP + NADPH + 2 H(+). Catalyzes the irreversible NADPH-dependent deamination of GMP to IMP. It functions in the conversion of nucleobase, nucleoside and nucleotide derivatives of G to A nucleotides, and in maintaining the intracellular balance of A and G nucleotides. Plays a role in modulating cellular differentiation. The sequence is that of GMP reductase 2 from Homo sapiens (Human).